Here is a 294-residue protein sequence, read N- to C-terminus: Oligopeptide transport system permease protein OppC (294 aa).

A run of 6 helical transmembrane segments spans residues 27 to 47, 94 to 114, 127 to 147, 151 to 171, 202 to 224, and 260 to 280; these read MISTIFLVAVFLIVYIYSMFL, IAFAVTLITLVVGNILGVITG, FTDFVMILPSMMIIIVFVTII, NSWSLIGIISIFSWIGTTRLI, IWPNLSTLVIAEATLVFAGNIGL, and WTWVPATVVILIVVLAIIFIG. An ABC transmembrane type-1 domain is found at 88 to 280; it reads ARNSFNIAFA…IVVLAIIFIG (193 aa).

The protein belongs to the binding-protein-dependent transport system permease family. OppBC subfamily. The complex is composed of two ATP-binding proteins (OppD and OppF), two transmembrane proteins (OppB and OppC) and a solute-binding protein (OppA).

It localises to the cell membrane. Part of the ABC transporter complex OppABCDF involved in the uptake of oligopeptides. Probably responsible for the translocation of the substrate across the membrane. The protein is Oligopeptide transport system permease protein OppC of Lactococcus lactis subsp. cremoris (strain SK11).